A 557-amino-acid polypeptide reads, in one-letter code: Formate--tetrahydrofolate ligase (557 aa).

T67–T74 serves as a coordination point for ATP.

Belongs to the formate--tetrahydrofolate ligase family.

The catalysed reaction is (6S)-5,6,7,8-tetrahydrofolate + formate + ATP = (6R)-10-formyltetrahydrofolate + ADP + phosphate. Its pathway is one-carbon metabolism; tetrahydrofolate interconversion. The sequence is that of Formate--tetrahydrofolate ligase from Cereibacter sphaeroides (strain KD131 / KCTC 12085) (Rhodobacter sphaeroides).